Reading from the N-terminus, the 572-residue chain is MAEEAKAKGNAAFSSGDFTTAINHFTEAIALAPTNHVLFSNRSAAHASLHQYAEALSDAKETIKLKPYWPKGYSRLGAAHLGLNQFELAVTAYKKGLDVDPTNEALKSGLADAEASVARSRAAPNPFGDAFQGPEMWTKLTSDPSTRGFLQQPDFVNMMQEIQKNPSSLNLYLKDQRVMQSLGVLLNVKFRPPPPQGDEAEVPESDMGQSSSNEPEVEKKREPEPEPEPEVTEEKEKKERKEKAKKEKELGNAAYKKKDFETAIQHYSTAIEIDDEDISYLTNRAAVYLEMGKYNECIEDCNKAVERGRELRSDYKMVARALTRKGTALTKMAKCSKDYEPAIEAFQKALTEHRNPDTLKRLNDAERAKKEWEQKQYFDPKLGDEEREKGNDFFKEQKYPEAIKHYTEAIKRNPNDHKAYSNRAASYTKLGAMPEGLKDAEKCIELDPTFSKGYSRKAAVQFFLKEYDNAMETYQAGLEHDPSNQELLDGVKRCVQQINKANRGDLTPEELKERQAKGMQDPEIQNILTDPVMRQVLSDLQENPSAAQKHMQNPMVMNKIQKLISAGIVQMK.

3 TPR repeats span residues 2–35, 37–69, and 70–103; these read AEEAKAKGNAAFSSGDFTTAINHFTEAIALAPTN, VLFSNRSAAHASLHQYAEALSDAKETIKLKPYW, and PKGYSRLGAAHLGLNQFELAVTAYKKGLDVDPTN. The STI1 1 domain occupies 133-172; sequence GPEMWTKLTSDPSTRGFLQQPDFVNMMQEIQKNPSSLNLY. Ser-167 carries the phosphoserine modification. The disordered stretch occupies residues 189–248; that stretch reads KFRPPPPQGDEAEVPESDMGQSSSNEPEVEKKREPEPEPEPEVTEEKEKKERKEKAKKEK. A compositionally biased stretch (basic and acidic residues) spans 232–248; it reads TEEKEKKERKEKAKKEK. A Bipartite nuclear localization signal motif is present at residues 241 to 258; the sequence is KEKAKKEKELGNAAYKKK. 7 TPR repeats span residues 244-277, 279-311, 319-356, 358-382, 383-416, 418-450, and 451-484; these read AKKEKELGNAAYKKKDFETAIQHYSTAIEIDDED, SYLTNRAAVYLEMGKYNECIEDCNKAVERGREL, ARALTRKGTALTKMAKCSKDYEPAIEAFQKALTEHRNP, TLKRLNDAERAKKEWEQKQYFDPKL, GDEEREKGNDFFKEQKYPEAIKHYTEAIKRNPND, KAYSNRAASYTKLGAMPEGLKDAEKCIELDPTF, and SKGYSRKAAVQFFLKEYDNAMETYQAGLEHDPSN. One can recognise an STI1 2 domain in the interval 521–560; sequence DPEIQNILTDPVMRQVLSDLQENPSAAQKHMQNPMVMNKI.

Co-chaperone that forms a complex with HSP70 and HSP90 and preproteins (e.g. chloroplast preproteins). In terms of processing, phosphorylated. Post-translationally, acetylated.

The protein localises to the cytoplasm. It is found in the nucleus. Its function is as follows. Mediates the association of the molecular chaperones HSP70 and HSP90. Mediates nuclear encoded chloroplast preproteins binding to HSP90 prior to chloroplastic sorting. This chain is Hsp70-Hsp90 organizing protein 1 (HOP1), found in Arabidopsis thaliana (Mouse-ear cress).